Here is a 159-residue protein sequence, read N- to C-terminus: Eukaryotic translation initiation factor 5A (159 aa).

Lys55 carries the post-translational modification Hypusine.

It belongs to the eIF-5A family. Lys-55 undergoes hypusination, a unique post-translational modification that consists in the addition of a butylamino group from spermidine to lysine side chain, leading to the formation of the unusual amino acid hypusine. eIF-5As are the only known proteins to undergo this modification, which is essential for their function.

Its subcellular location is the cytoplasm. Functionally, translation factor that promotes translation elongation and termination, particularly upon ribosome stalling at specific amino acid sequence contexts. Binds between the exit (E) and peptidyl (P) site of the ribosome and promotes rescue of stalled ribosome: specifically required for efficient translation of polyproline-containing peptides as well as other motifs that stall the ribosome. Acts as a ribosome quality control (RQC) cofactor by joining the RQC complex to facilitate peptidyl transfer during CAT tailing step. The sequence is that of Eukaryotic translation initiation factor 5A (eif5a) from Dictyostelium discoideum (Social amoeba).